The chain runs to 499 residues: Protein singed wings 2 (499 aa).

Positions 1–29 (MPSGVFQKRPKAAETISLFCMILIRLSRA) are cleaved as a signal peptide. LRR repeat units lie at residues 154-175 (ELHT…TFKR) and 178-199 (PLKV…LLLP). Positions 210-265 (NPWNCTRNFKWLLLQPEKGRLVVDRDELICTDRKYKERQMLMVMHYKLELKRQCQS) constitute an LRRCT 1 domain. LRR repeat units lie at residues 307 to 328 (NTTT…RDNP), 332 to 353 (HVVD…EDTY), and 357 to 378 (NFRL…ALDN). The LRRCT 2 domain occupies 394 to 449 (NPWHCTCKFGSRMRELLTKYKDIVRDAWNVSCTYRLDDDQLLAKVLTLSRQEMCNL).

In terms of biological role, has a role in the ecdysone induced cascade; probably indirect control of 'late' ecdysone genes. In Drosophila melanogaster (Fruit fly), this protein is Protein singed wings 2.